The sequence spans 159 residues: Ribosomal RNA large subunit methyltransferase H (159 aa).

S-adenosyl-L-methionine is bound by residues Leu76, Gly108, and 127–132 (FSKMTF).

This sequence belongs to the RNA methyltransferase RlmH family. Homodimer.

It is found in the cytoplasm. It catalyses the reaction pseudouridine(1915) in 23S rRNA + S-adenosyl-L-methionine = N(3)-methylpseudouridine(1915) in 23S rRNA + S-adenosyl-L-homocysteine + H(+). Specifically methylates the pseudouridine at position 1915 (m3Psi1915) in 23S rRNA. This Clostridium botulinum (strain 657 / Type Ba4) protein is Ribosomal RNA large subunit methyltransferase H.